We begin with the raw amino-acid sequence, 297 residues long: GTP-binding protein REM 1 (297 aa).

Residues 1–10 (MTLNTQQEAK) are compositionally biased toward polar residues. A disordered region spans residues 1–73 (MTLNTQQEAK…DGWSSESSDS (73 aa)). Ser51 carries the phosphoserine modification. Residues 64 to 73 (DGWSSESSDS) show a composition bias toward low complexity. Residues 87-94 (GDPGVGKT) and 194-197 (NKAD) contribute to the GTP site. Residues 267–286 (ARRFLARLTARSARRRALKA) form a calmodulin-binding region.

The protein belongs to the small GTPase superfamily. RGK family. In terms of assembly, in vitro, interacts with calmodulin in a calcium-dependent manner. Interacts 14-3-3 family members including YWHAE, YWHAH, YWHAQ, YWHAZ in a phosphorylation-dependent manner. High expression in cardiac muscle. Moderate expression in lung, skeletal muscle and kidney. Low levels in spleen and brain.

Its function is as follows. Promotes endothelial cell sprouting and actin cytoskeletal reorganization. May be involved in angiogenesis. May function in Ca(2+) signaling. In Mus musculus (Mouse), this protein is GTP-binding protein REM 1 (Rem1).